The sequence spans 193 residues: MELNPVDSILSDRIQAIVATEKNIDDMMKCAREIMQDLGKEKQISKNKMDDNANSFKKLITQVENELSAQMQYLSHVCVGSSHQGSTFGVLQNSLLAQSGLSSLHSELAQILKNIEPPTQEVDEDNEDEEDSGDADMLEETPEDVVAPRTTSSSATTSDGGSGGADDAASSSAPRSQEERRSTEEEEGEQMEN.

The stretch at 31-68 forms a coiled coil; that stretch reads AREIMQDLGKEKQISKNKMDDNANSFKKLITQVENELS. The segment at 115 to 193 is disordered; it reads IEPPTQEVDE…EEEEGEQMEN (79 aa). A compositionally biased stretch (acidic residues) spans 121–143; sequence EVDEDNEDEEDSGDADMLEETPE. Low complexity predominate over residues 150–175; the sequence is TTSSSATTSDGGSGGADDAASSSAPR. Over residues 184 to 193 the composition is skewed to acidic residues; sequence EEEEGEQMEN.

It belongs to the Mediator complex subunit 11 family. As to quaternary structure, component of the Mediator complex.

It localises to the nucleus. Functionally, component of the Mediator complex, a coactivator involved in the regulated transcription of nearly all RNA polymerase II-dependent genes. Mediator functions as a bridge to convey information from gene-specific regulatory proteins to the basal RNA polymerase II transcription machinery. Mediator is recruited to promoters by direct interactions with regulatory proteins and serves as a scaffold for the assembly of a functional pre-initiation complex with RNA polymerase II and the general transcription factors. The polypeptide is Mediator of RNA polymerase II transcription subunit 11 (mdt-11) (Caenorhabditis briggsae).